The chain runs to 1964 residues: Probable helicase with zinc finger domain (1964 aa).

The C3H1-type zinc-finger motif lies at 178–206 (SEEYTLCKRFLEQGICRYGAQCTSAHSQE). Ser248 is modified (phosphoserine). An ATP-binding site is contributed by 668–675 (GPYGTGKT). Residues 794-797 (DEAA) carry the DEAA box motif. The segment covering 1116–1127 (HSGNSSRQQQSP) has biased composition (polar residues). A disordered region spans residues 1116–1135 (HSGNSSRQQQSPPKVKSLYH). Residue Thr1163 is modified to Phosphothreonine. Position 1245 is an omega-N-methylarginine (Arg1245). 6 disordered regions span residues 1248 to 1350 (PIPY…LPAP), 1360 to 1379 (HFHP…QPHT), 1388 to 1449 (LPEQ…QAGP), 1463 to 1491 (QSPA…RAIT), 1631 to 1655 (QVQP…QFAN), and 1743 to 1964 (QHAA…SYFK). Composition is skewed to basic and acidic residues over residues 1268 to 1281 (HAEK…RNGK) and 1292 to 1308 (NKIR…KQVD). Pro residues predominate over residues 1365–1374 (PQLPRPPFPA). Over residues 1388–1431 (LPEQPNQMAPQPNQVAPQPNQMTPQPNQVAPQPNQVVQQQSQAP) the composition is skewed to low complexity. Over residues 1635-1644 (RSPPAVPSPP) the composition is skewed to pro residues. Phosphoserine is present on residues Ser1636, Ser1760, Ser1763, and Ser1788. Residues 1755-1765 (SSRTVSASSLP) are compositionally biased toward polar residues. Composition is skewed to polar residues over residues 1799–1813 (PQDS…QGHS) and 1826–1849 (WANT…TSQP). The span at 1860-1870 (KPPEDQLKPES) shows a compositional bias: basic and acidic residues. Polar residues-rich tracts occupy residues 1872–1881 (EVSSSFNYSM) and 1897–1910 (IAES…QSPA). Positions 1941 to 1956 (PLSLLQELSLGSSPGS) are enriched in low complexity.

Belongs to the DNA2/NAM7 helicase family. As to quaternary structure, interacts with POLR2A. Interacts with SMYD3; the interaction may bridge SMYD3 and RNA polymerase II. Interacts with SMYD2.

It localises to the nucleus. In terms of biological role, may act as a helicase that plays a role in RNA metabolism in multiple tissues and organs within the developing embryo. In Mus musculus (Mouse), this protein is Probable helicase with zinc finger domain (Helz).